A 36-amino-acid polypeptide reads, in one-letter code: Mating hormone A-factor 1 (36 aa).

The propeptide occupies 1-21 (MQPSTATAAPKEKTSSEKKDN). Cys33 is modified (cysteine methyl ester). A lipid anchor (S-farnesyl cysteine) is attached at Cys33. Residues 34–36 (VIA) constitute a propeptide, removed in mature form.

The protein resides in the cell membrane. In terms of biological role, the active factor is excreted into the culture medium by haploid cells of the A mating type and acts on cells of the opposite mating type (type alpha). It mediates the conjugation process between the two types by inhibiting the initiation of DNA synthesis in type alpha cells and synchronizing them with type A. The chain is Mating hormone A-factor 1 (MFA1) from Saccharomyces cerevisiae (strain ATCC 204508 / S288c) (Baker's yeast).